We begin with the raw amino-acid sequence, 268 residues long: Calpain small subunit 1 (268 aa).

At Met-1 the chain carries N-acetylmethionine. Residue Ser-6 is modified to Phosphoserine. One can recognise an EF-hand 1; atypical domain in the interval 96–130 (EEVRQFRKLFVQLAGDDMEVSATELMNILNKVVTR). 10 residues coordinate Ca(2+): Ala-109, Asp-112, Glu-114, Glu-119, Asp-137, Asp-152, Asp-154, Thr-156, Lys-158, and Glu-163. EF-hand domains lie at 139–172 (FGID…NNIK), 169–204 (NNIK…AGFH), 205–233 (LNEH…ISCL), and 234–268 (VRLD…TMYS). Lys-179 is modified (N6-acetyllysine). The Ca(2+) site is built by Asp-182, Asp-184, Ser-186, Thr-188, Glu-193, and Asp-225.

Homodimer or heterodimer of a large (catalytic) and a small (regulatory) subunit. In presence of calcium, the heterodimer dissociates.

Its subcellular location is the cytoplasm. The protein localises to the cell membrane. Regulatory subunit of the calcium-regulated non-lysosomal thiol-protease which catalyzes limited proteolysis of substrates involved in cytoskeletal remodeling and signal transduction. Essential for embryonic development. The chain is Calpain small subunit 1 (Capns1) from Mus musculus (Mouse).